Consider the following 177-residue polypeptide: MSSPRERGKSLMESSGSEPPVTPSRYESQKRRDWNTFGQYLKNQRPPVPMSHCSCNHVLDFLRYLDQFGKTKVHVPGCMFYGQPEPPAPCTCPLRQAWGSLDALIGRLRAAYEENGGPPETNPFASGAIRVYLREVRECQAKARGIPYKKKKKKKPTPEMGGGREDSSSSSSSFSFS.

Residues 1–10 (MSSPRERGKS) show a composition bias toward basic and acidic residues. Disordered stretches follow at residues 1-31 (MSSP…SQKR) and 144-177 (RGIP…FSFS). Residues 25–152 (RYESQKRRDW…ARGIPYKKKK (128 aa)) enclose the ALOG domain. Residues 150 to 154 (KKKKK) carry the Nuclear localization signal motif. A compositionally biased stretch (low complexity) spans 168–177 (SSSSSSFSFS).

The protein belongs to the plant homeotic and developmental regulators ALOG protein family.

Its subcellular location is the nucleus. Probable transcription regulator that acts as a developmental regulator by promoting cell growth in response to light. The sequence is that of Protein LIGHT-DEPENDENT SHORT HYPOCOTYLS 10 (LSH10) from Arabidopsis thaliana (Mouse-ear cress).